The following is a 211-amino-acid chain: Mitotic spindle assembly checkpoint protein MAD2B (211 aa).

Positions 13 to 203 (QVVADVLCEF…SDILKMQLYV (191 aa)) constitute an HORMA domain. Residues 21 to 155 (EFLEVAVHLI…FTVLVHTREA (135 aa)) form a mediates interaction with REV1 and REV3L and homodimerization region.

In terms of assembly, homooligomer. Heterodimer with REV3L. This dimer forms the minimal DNA polymerase zeta complex (Pol-zeta2), with REV3L bearing DNA polymerase catalytic activity, although its activity is very low in this context. Component of the tetrameric Pol-zeta complex (Pol-zeta4), which consists of REV3L, MAD2L2, POLD2 and POLD3; Pol-zeta4 is the fully active form of DNA polymerase zeta. Component of the shieldin complex, consisting of SHLD1, SHLD2, SHLD3 and MAD2L2/REV7. Within the complex, SHLD2 forms a scaffold which interacts with a SHLD3-MAD2L2 subcomplex via its N-terminus, and with SHLD1 via its C-terminus. Interacts with REV1. Interacts with ADAM9. Interacts with CHAMP1. Interacts with FZR1 (in complex with the anaphase promoting complex APC). May interact with CDC20. Interacts with RAN. Interacts with ELK1; the interaction is direct and recruits MAD2L2 to ELK1-specific promoters. May interact with the JNK kinases MAPK8 and/or MAPK9 to stimulate ELK1 phosphorylation and transcriptional activity upon DNA damage. Interacts with TCF7L2; prevents its binding to promoters and negatively modulates its transcriptional activity. Interacts with YY1AP1. Interacts with PRCC; the interaction is direct. Interacts with POGZ. Interacts with ASTE1.

It is found in the nucleus. It localises to the cytoplasm. The protein localises to the cytoskeleton. Its subcellular location is the spindle. Functionally, adapter protein able to interact with different proteins and involved in different biological processes. Mediates the interaction between the error-prone DNA polymerase zeta catalytic subunit REV3L and the inserter polymerase REV1, thereby mediating the second polymerase switching in translesion DNA synthesis. Translesion DNA synthesis releases the replication blockade of replicative polymerases, stalled in presence of DNA lesions. Component of the shieldin complex, which plays an important role in repair of DNA double-stranded breaks (DSBs). During G1 and S phase of the cell cycle, the complex functions downstream of TP53BP1 to promote non-homologous end joining (NHEJ) and suppress DNA end resection. Mediates various NHEJ-dependent processes including immunoglobulin class-switch recombination, and fusion of unprotected telomeres. May also regulate another aspect of cellular response to DNA damage through regulation of the JNK-mediated phosphorylation and activation of the transcriptional activator ELK1. Inhibits the FZR1- and probably CDC20-mediated activation of the anaphase promoting complex APC thereby regulating progression through the cell cycle. Regulates TCF7L2-mediated gene transcription and may play a role in epithelial-mesenchymal transdifferentiation. This Bos taurus (Bovine) protein is Mitotic spindle assembly checkpoint protein MAD2B (MAD2L2).